Here is a 166-residue protein sequence, read N- to C-terminus: Crossover junction endodeoxyribonuclease RuvC (166 aa).

Active-site residues include D7, E70, and H143. Mg(2+) is bound by residues D7, E70, and H143.

This sequence belongs to the RuvC family. As to quaternary structure, homodimer which binds Holliday junction (HJ) DNA. The HJ becomes 2-fold symmetrical on binding to RuvC with unstacked arms; it has a different conformation from HJ DNA in complex with RuvA. In the full resolvosome a probable DNA-RuvA(4)-RuvB(12)-RuvC(2) complex forms which resolves the HJ. Requires Mg(2+) as cofactor.

Its subcellular location is the cytoplasm. It catalyses the reaction Endonucleolytic cleavage at a junction such as a reciprocal single-stranded crossover between two homologous DNA duplexes (Holliday junction).. Its function is as follows. The RuvA-RuvB-RuvC complex processes Holliday junction (HJ) DNA during genetic recombination and DNA repair. Endonuclease that resolves HJ intermediates. Cleaves cruciform DNA by making single-stranded nicks across the HJ at symmetrical positions within the homologous arms, yielding a 5'-phosphate and a 3'-hydroxyl group; requires a central core of homology in the junction. The consensus cleavage sequence is 5'-(A/T)TT(C/G)-3'. Cleavage occurs on the 3'-side of the TT dinucleotide at the point of strand exchange. HJ branch migration catalyzed by RuvA-RuvB allows RuvC to scan DNA until it finds its consensus sequence, where it cleaves and resolves the cruciform DNA. This chain is Crossover junction endodeoxyribonuclease RuvC, found in Thermus thermophilus (strain ATCC BAA-163 / DSM 7039 / HB27).